Here is a 1140-residue protein sequence, read N- to C-terminus: Protein shank (1140 aa).

6 ANK repeats span residues 144 to 174 (QGET…HVDF), 178 to 207 (EGQT…SPNY), 211 to 242 (IGLT…DIGV), 246 to 275 (HGNH…QIDA), 279 to 309 (NGNS…HLAV), and 312 to 341 (QGQT…KSSV). Positions 337 to 412 (PKSSVPYRGT…ITPSEYGTMR (76 aa)) are disordered. Over residues 351-364 (TRRRLSSTITRRRS) the composition is skewed to basic residues. The segment covering 388-412 (SAAPSPSPSRSSRTTITPSEYGTMR) has biased composition (low complexity). One can recognise a PDZ domain in the interval 436 to 529 (ILVIPRGVKG…TITLKVITVD (94 aa)). 2 stretches are compositionally biased toward polar residues: residues 640 to 657 (DQES…NSVS) and 687 to 704 (TSTF…QLSR). Disordered stretches follow at residues 640-673 (DQES…ASSA), 687-856 (TSTF…AASA), 875-902 (QLKK…STTD), 961-993 (KDSG…HSPN), and 1008-1028 (YGQK…SSTV). 2 stretches are compositionally biased toward low complexity: residues 761–775 (QHQN…QQHP) and 784–793 (PQPIQQQQSS). 2 stretches are compositionally biased toward pro residues: residues 794-806 (IPPP…PPHC) and 823-847 (VPPP…PPPG). Residues 964–974 (GYTSSRTSLEP) are compositionally biased toward polar residues. A compositionally biased stretch (basic and acidic residues) spans 977-988 (SEEKDHRPHFSL). The span at 1015–1028 (SVASSSTASSSSTV) shows a compositional bias: low complexity. An SAM domain is found at 1078–1140 (WSVDDVIGWL…IESALRGLLQ (63 aa)).

The protein belongs to the SHANK family. As to quaternary structure, interacts (via PDZ domain) with egl-19 (via C-terminus). Expressed in the pharynx, pharyngeal-intestinal valve, intestine, rectal epithelial cells, tail neurons, nerve cord and sperm.

It is found in the cell projection. Its subcellular location is the pseudopodium. The protein resides in the cytoplasmic vesicle. It localises to the postsynaptic density. Its function is as follows. Scaffold protein that most likely acts in the postsynaptic density (PSD) of excitatory synapses which orchestrates synapse formation and maintenance at neuromuscular junctions. Associates with and trafficks the L-type calcium channel egl-19 to the cell surface of body wall muscles to ensure the function of the calcium channel and therefore maintain the Ca(2+) current density. The maintenance of Ca(2+) also allows for the downstream regulation of Ca(2+)-induced expression of genes such as gem-4. Plays a role in the regulation of the defecation cycle, and this may be in association with the inositol trisphosphate (IP3) receptor itr-1, which in turn mediates periodic calcium release and muscle contractions. Required for normal fertility and pharyngeal pumping. This is Protein shank from Caenorhabditis elegans.